A 358-amino-acid polypeptide reads, in one-letter code: MSDIETFYDVMRRQGITRRSFMKSVRSPQHVLGLGPSFVPKIGEAMETKPRTPVVWVHGLECTCCSESFIRSAHPLAKDVVLSMISLDYDDTLMAAAGHAAEAAFEETIAKYKGNYILAVEGNPPLNEDGMFCITGGKPFVEKLRHAAEGAKAIISWGACASYGCVQAAAPNPTQATPVHKVITDKPIIKVPGCPPIAEVMTGVITYMLTFDRMPELDRQGRPAMFYSQRIHDKCYRRPHFDAGQFVEHWDDENARKGYCLYKMGCKGPTTYNACSTVPLERRRHFPIQSGHGCIGCSEDGFWDQGSFYDRLTTIKQFGIEATADQIGWTATGLVGAAVAAHAAVSVLKRAQKKNEEA.

Residues 1-45 (MSDIETFYDVMRRQGITRRSFMKSVRSPQHVLGLGPSFVPKIGEA) form the signal peptide. 8 residues coordinate [4Fe-4S] cluster: Cys-62, Cys-65, Cys-160, Cys-194, His-232, Cys-235, Cys-260, and Cys-266. Residues Cys-275, Cys-294, and Cys-297 each coordinate [3Fe-4S] cluster.

Belongs to the [NiFe]/[NiFeSe] hydrogenase small subunit family. In terms of assembly, heterodimer of a large and a small subunit. [4Fe-4S] cluster is required as a cofactor. It depends on [3Fe-4S] cluster as a cofactor.

The protein resides in the cell membrane. It carries out the reaction H2 + A = AH2. Its function is as follows. This enzyme recycles the H(2) produced by nitrogenase to increase the production of ATP and to protect nitrogenase against inhibition or damage by O(2) under carbon- or phosphate-limited conditions. The chain is Uptake hydrogenase small subunit (hupA) from Rhodobacter capsulatus (Rhodopseudomonas capsulata).